We begin with the raw amino-acid sequence, 238 residues long: 15,16-dihydrobiliverdin:ferredoxin oxidoreductase (238 aa).

Belongs to the HY2 family.

It catalyses the reaction 15,16-dihydrobiliverdin + oxidized 2[4Fe-4S]-[ferredoxin] = biliverdin IXalpha + reduced 2[4Fe-4S]-[ferredoxin] + 2 H(+). Catalyzes the two-electron reduction of biliverdin IX-alpha at the C15 methine bridge. The protein is 15,16-dihydrobiliverdin:ferredoxin oxidoreductase of Prochlorococcus marinus (strain NATL1A).